Here is a 332-residue protein sequence, read N- to C-terminus: L-lactate dehydrogenase A chain (332 aa).

Residue Lys5 is modified to N6-acetyllysine; alternate. Lys5 carries the N6-succinyllysine; alternate modification. Lys14 is modified (N6-acetyllysine). Residue Thr18 is modified to Phosphothreonine. 29–57 (GAVGMACAISILMKDLADELALVDVIEDK) contributes to the NAD(+) binding site. Lys57 carries the post-translational modification N6-acetyllysine; alternate. Lys57 is covalently cross-linked (Glycyl lysine isopeptide (Lys-Gly) (interchain with G-Cter in SUMO2); alternate). Lys81 is subject to N6-acetyllysine. Position 99 (Arg99) interacts with NAD(+). Residue Arg106 participates in substrate binding. Lys118 is modified (N6-acetyllysine; alternate). At Lys118 the chain carries N6-succinyllysine; alternate. Position 126 is an N6-acetyllysine (Lys126). Asn138 contributes to the NAD(+) binding site. Substrate contacts are provided by Asn138 and Arg169. The active-site Proton acceptor is the His193. At Lys232 the chain carries N6-acetyllysine. The residue at position 239 (Tyr239) is a Phosphotyrosine. At Lys243 the chain carries N6-acetyllysine. Residue Thr248 participates in substrate binding. Phosphothreonine occurs at positions 309 and 322.

The protein belongs to the LDH/MDH superfamily. LDH family. In terms of assembly, homotetramer. Interacts with PTEN upstream reading frame protein MP31. In terms of processing, ISGylated.

The protein localises to the cytoplasm. The enzyme catalyses (S)-lactate + NAD(+) = pyruvate + NADH + H(+). The protein operates within fermentation; pyruvate fermentation to lactate; (S)-lactate from pyruvate: step 1/1. Interconverts simultaneously and stereospecifically pyruvate and lactate with concomitant interconversion of NADH and NAD(+). The chain is L-lactate dehydrogenase A chain (LDHA) from Monodelphis domestica (Gray short-tailed opossum).